The primary structure comprises 687 residues: Amine oxidase [copper-containing] gamma 2 (687 aa).

The first 24 residues, 1-24, serve as a signal peptide directing secretion; that stretch reads MVELSFSQLLVLLLSLLFLFTTLA. N-linked (GlcNAc...) asparagine glycosylation is present at asparagine 154. Cysteines 169 and 191 form a disulfide. Asparagine 244 carries N-linked (GlcNAc...) asparagine glycosylation. 333-344 contributes to the substrate binding site; it reads YMDAGEFGLGPS. Catalysis depends on aspartate 335, which acts as the Proton acceptor. An intrachain disulfide couples cysteine 354 to cysteine 380. 420-425 contacts substrate; sequence VGNYDY. Tyrosine 423 functions as the Schiff-base intermediate with substrate; via topaquinone in the catalytic mechanism. Tyrosine 423 is subject to 2',4',5'-topaquinone. Residues histidine 480 and histidine 482 each coordinate Cu cation. Residues aspartate 489, methionine 490, and aspartate 491 each coordinate Mn(2+). Asparagine 497 and asparagine 598 each carry an N-linked (GlcNAc...) asparagine glycan. Mn(2+) contacts are provided by aspartate 632 and isoleucine 633. A Cu cation-binding site is contributed by histidine 643.

Belongs to the copper/topaquinone oxidase family. Homodimer. It depends on Cu cation as a cofactor. Zn(2+) is required as a cofactor. The cofactor is L-topaquinone. Mn(2+) serves as cofactor. Topaquinone (TPQ) is generated by copper-dependent autoxidation of a specific tyrosyl residue. In terms of tissue distribution, expressed in roots, leaves and cotyledons.

The protein resides in the secreted. The protein localises to the extracellular space. It is found in the apoplast. The catalysed reaction is a primary methyl amine + O2 + H2O = an aldehyde + H2O2 + NH4(+). Its pathway is amine and polyamine degradation; putrescine degradation. Its function is as follows. Copper amine oxidase that can use putrescine and spermidine as substrates. This is Amine oxidase [copper-containing] gamma 2 from Arabidopsis thaliana (Mouse-ear cress).